The primary structure comprises 449 residues: Hyaluronidase-1 (449 aa).

The first 39 residues, 1–39, serve as a signal peptide directing secretion; the sequence is MKPFSPEVSPDPCPATAAHLLRTYTLFLTLLELAQGCRG. Intrachain disulfides connect Cys58–Cys348 and Cys222–Cys236. 2 N-linked (GlcNAc...) asparagine glycosylation sites follow: Asn85 and Asn114. The active-site Proton donor is the Glu146. 3 N-linked (GlcNAc...) asparagine glycosylation sites follow: Asn231, Asn252, and Asn365. Disulfide bonds link Cys373–Cys384, Cys378–Cys433, and Cys435–Cys444. In terms of domain architecture, EGF-like spans 433–444; that stretch reads CRCYRGWSGEWC.

It belongs to the glycosyl hydrolase 56 family.

It is found in the secreted. It localises to the lysosome. The enzyme catalyses Random hydrolysis of (1-&gt;4)-linkages between N-acetyl-beta-D-glucosamine and D-glucuronate residues in hyaluronate.. May have a role in promoting tumor progression. May block the TGFB1-enhanced cell growth. Overexpression of HYAL1 suppressed the growth rate of colon carcinoma cell tumors in an experimental model. The polypeptide is Hyaluronidase-1 (Hyal1) (Rattus norvegicus (Rat)).